Reading from the N-terminus, the 362-residue chain is Homeobox protein extradenticle (362 aa).

In terms of domain architecture, PBC spans 34–225; sequence PRKQDIGEIL…VMILRSRFLD (192 aa). Positions 41 to 120 are PBC-A; sequence EILQQIMNIT…EGVAGPEKGG (80 aa). The segment at 123–225 is PBC-B; it reads DFLSQSDLTG…VMILRSRFLD (103 aa). The segment at residues 226–288 is a DNA-binding region (homeobox; TALE-type); that stretch reads ARRKRRNFSK…NKRIRYKKNI (63 aa). Residues 305–362 are disordered; sequence GASPYSMGGPPSGAATPMMSPAPAQDSMGYSLGSGGYDQQQPYDGSMGYDQLHQDLSP.

Belongs to the TALE/PBX homeobox family.

It localises to the nucleus. In terms of biological role, transcription factor which acts with the selector homeodomain proteins altering the regulation of downstream target genes such as wingless (wg), teashirt (tsh) and decapentaplegic (dpp), thus affecting segmental identity. The sequence is that of Homeobox protein extradenticle from Anopheles gambiae (African malaria mosquito).